Reading from the N-terminus, the 600-residue chain is Transcription factor efl-3 (600 aa).

A disordered region spans residues 35–65 (LPEPRVNRTTDPDHENLLPSPVPRPSPAMSQ). Over residues 39–50 (RVNRTTDPDHEN) the composition is skewed to basic and acidic residues. 2 consecutive DNA-binding regions follow at residues 95-164 (RKEK…QWQG) and 253-343 (RDRQ…VYCG).

Belongs to the E2F/DP family.

It localises to the nucleus. Its function is as follows. Probable transcription factor which represses gene expression in a subset of ventral nerve cord neurons. Involved in regulating programmed cell death and determining cell fate during development, acting in a partially redundant manner with lin-39 to repress the BH3 domain-encoding gene egl-1 in the VA and VB motor neurons. The chain is Transcription factor efl-3 from Caenorhabditis elegans.